A 167-amino-acid polypeptide reads, in one-letter code: Large ribosomal subunit protein uL10 (167 aa).

Belongs to the universal ribosomal protein uL10 family. In terms of assembly, part of the ribosomal stalk of the 50S ribosomal subunit. The N-terminus interacts with L11 and the large rRNA to form the base of the stalk. The C-terminus forms an elongated spine to which L12 dimers bind in a sequential fashion forming a multimeric L10(L12)X complex.

Functionally, forms part of the ribosomal stalk, playing a central role in the interaction of the ribosome with GTP-bound translation factors. In Flavobacterium johnsoniae (strain ATCC 17061 / DSM 2064 / JCM 8514 / BCRC 14874 / CCUG 350202 / NBRC 14942 / NCIMB 11054 / UW101) (Cytophaga johnsonae), this protein is Large ribosomal subunit protein uL10.